The following is a 176-amino-acid chain: Ferritin, middle subunit (176 aa).

Positions 7-156 constitute a Ferritin-like diiron domain; sequence QNYHHDCERA…DHITNLTKMD (150 aa). The Fe cation site is built by glutamate 24, glutamate 59, histidine 62, glutamate 104, and glutamine 138.

This sequence belongs to the ferritin family. In terms of assembly, oligomer of 24 subunits. There are at least two types of subunits. The functional molecule forms a roughly spherical shell with a diameter of 12 nm and contains a central cavity into which the insoluble mineral iron core is deposited. As to expression, almost exclusively in the gonads.

It carries out the reaction 4 Fe(2+) + O2 + 4 H(+) = 4 Fe(3+) + 2 H2O. Functionally, stores iron in a soluble, non-toxic, readily available form. Important for iron homeostasis. Has ferroxidase activity. Iron is taken up in the ferrous form and deposited as ferric hydroxides after oxidation. The polypeptide is Ferritin, middle subunit (Salmo salar (Atlantic salmon)).